A 64-amino-acid polypeptide reads, in one-letter code: Large ribosomal subunit protein bL35 (64 aa).

The span at 1–26 (MPKMKSHRGASKRFKRTASGKLKRGR) shows a compositional bias: basic residues. Disordered stretches follow at residues 1-28 (MPKM…GRAY) and 33-52 (FGNK…MVSS).

It belongs to the bacterial ribosomal protein bL35 family.

The sequence is that of Large ribosomal subunit protein bL35 from Exiguobacterium sibiricum (strain DSM 17290 / CCUG 55495 / CIP 109462 / JCM 13490 / 255-15).